An 863-amino-acid polypeptide reads, in one-letter code: Dynamin-3 (863 aa).

Positions 28–294 (LLELPQIAVV…LTNHIRDTLP (267 aa)) constitute a Dynamin-type G domain. The segment at 38–45 (GGQSAGKS) is G1 motif. Residue 38 to 46 (GGQSAGKSS) participates in GTP binding. Residues 64-66 (VTR) are G2 motif. The interval 136–139 (DLPG) is G3 motif. A G4 motif region spans residues 205–208 (TKLD). Residue 205 to 211 (TKLDLMD) coordinates GTP. Residue Y231 is modified to Phosphotyrosine. The segment at 235–238 (VNRS) is G5 motif. 236–239 (NRSQ) contacts GTP. K299 is modified (N6-acetyllysine). Residues 515 to 621 (QVIRKGWLTV…WKASLLRAGV (107 aa)) form the PH domain. Position 593 is a phosphotyrosine (Y593). N6-acetyllysine is present on K594. Disordered regions lie at residues 626–647 (SVGSNKTENDENGQAENFSMDP) and 742–863 (ATVS…SLLD). Polar residues predominate over residues 627-642 (VGSNKTENDENGQAEN). The GED domain maps to 653–744 (VETIRNLVDS…IIGDINTATV (92 aa)). Phosphoserine occurs at positions 763 and 767. 2 stretches are compositionally biased toward pro residues: residues 791–816 (PAIPSPGPHSGAPPVPFRPGPLPPFP) and 826–849 (PQVPSRPTRAPPSVPSRRPPPSPT). At S847 the chain carries Phosphoserine.

Belongs to the TRAFAC class dynamin-like GTPase superfamily. Dynamin/Fzo/YdjA family.

Its subcellular location is the cytoplasm. The protein resides in the cytoskeleton. The enzyme catalyses GTP + H2O = GDP + phosphate + H(+). Its function is as follows. Microtubule-associated force-producing protein involved in producing microtubule bundles and able to bind and hydrolyze GTP. Most probably involved in vesicular trafficking processes, in particular endocytosis. The sequence is that of Dynamin-3 (Dnm3) from Mus musculus (Mouse).